A 791-amino-acid chain; its full sequence is ATP-dependent 6-phosphofructokinase, platelet type (791 aa).

Met1 carries the post-translational modification N-acetylmethionine. The segment at 1 to 399 (MDNKVSASPR…NLNTYKRLAI (399 aa)) is N-terminal catalytic PFK domain 1. At Ser6 the chain carries Phosphoserine. Position 12 is a phosphoserine; by PKA (Ser12). Residue Ser21 is modified to Phosphoserine. Residues Gly34, 97–98 (RS), and 127–130 (GSGS) contribute to the ATP site. At Ser142 the chain carries Phosphoserine. Residues 173–175 (SID), Arg210, 217–219 (MGR), Glu273, Arg301, and 307–310 (HVQR) contribute to the substrate site. Residue Asp175 is the Proton acceptor of the active site. Residue Ser386 is modified to Phosphoserine. At Lys395 the chain carries N6-acetyllysine. Residues 400 to 411 (KLPDDKIQKSNC) are interdomain linker. The tract at residues 412 to 791 (NVAVINVGAP…RGGPEEPAAI (380 aa)) is C-terminal regulatory PFK domain 2. Beta-D-fructose 2,6-bisphosphate is bound at residue Arg481. Lys486 is modified (N6-acetyllysine). Beta-D-fructose 2,6-bisphosphate-binding positions include 538-542 (TVSNN), Arg576, 583-585 (MGG), and Glu639. O-linked (GlcNAc) serine glycosylation is present at Ser540. Tyr651 carries the post-translational modification Phosphotyrosine. Beta-D-fructose 2,6-bisphosphate is bound by residues Arg665 and 671 to 674 (HMQQ). Lys688 carries the N6-acetyllysine modification. Arg744 provides a ligand contact to beta-D-fructose 2,6-bisphosphate.

Belongs to the phosphofructokinase type A (PFKA) family. ATP-dependent PFK group I subfamily. Eukaryotic two domain clade 'E' sub-subfamily. In terms of assembly, homo- and heterotetramers. Phosphofructokinase (PFK) enzyme functions as a tetramer composed of different combinations of 3 types of subunits, called PFKM (M), PFKL (L) and PFKP (P). The composition of the PFK tetramer differs according to the tissue type it is present in. The kinetic and regulatory properties of the tetrameric enzyme are dependent on the subunit composition, hence can vary across tissues. Interacts with ATG4B; promoting phosphorylation of ATG4B. The cofactor is Mg(2+). GlcNAcylation decreases enzyme activity. In terms of processing, phosphorylation at Ser-386 promotes interaction with ATG4B.

The protein localises to the cytoplasm. The enzyme catalyses beta-D-fructose 6-phosphate + ATP = beta-D-fructose 1,6-bisphosphate + ADP + H(+). It functions in the pathway carbohydrate degradation; glycolysis; D-glyceraldehyde 3-phosphate and glycerone phosphate from D-glucose: step 3/4. Allosterically activated by ADP, AMP, or fructose 2,6-bisphosphate, and allosterically inhibited by ATP or citrate. Its function is as follows. Catalyzes the phosphorylation of D-fructose 6-phosphate to fructose 1,6-bisphosphate by ATP, the first committing step of glycolysis. The polypeptide is ATP-dependent 6-phosphofructokinase, platelet type (PFKP) (Oryctolagus cuniculus (Rabbit)).